The sequence spans 490 residues: Subtilisin-like protease 8 (490 aa).

The first 26 residues, 1-26 (MKGLLSLSVLPVLAYASPMIVDSIHQ), serve as a signal peptide directing secretion. The propeptide occupies 27-134 (NAAPILSSTN…YIERDSEVHT (108 aa)). One can recognise an Inhibitor I9 domain in the interval 43–134 (SYIVVFKKGV…YIERDSEVHT (92 aa)). Residues 144 to 450 (PWGLARISHR…GGSDDYKKII (307 aa)) enclose the Peptidase S8 domain. Residues Asp180 and His212 each act as charge relay system in the active site. The N-linked (GlcNAc...) asparagine glycan is linked to Asn282. Ser378 acts as the Charge relay system in catalysis. An N-linked (GlcNAc...) asparagine glycan is attached at Asn456.

This sequence belongs to the peptidase S8 family.

Its subcellular location is the secreted. Functionally, secreted subtilisin-like serine protease with keratinolytic activity that contributes to pathogenicity. The protein is Subtilisin-like protease 8 (SUB8) of Trichophyton verrucosum (strain HKI 0517).